The chain runs to 333 residues: Adenosine deaminase (333 aa).

Positions 12 and 14 each coordinate Zn(2+). Residues histidine 14, aspartate 16, and glycine 170 each contribute to the substrate site. Histidine 197 is a Zn(2+) binding site. Glutamate 200 functions as the Proton donor in the catalytic mechanism. Position 278 (aspartate 278) interacts with Zn(2+). Residue aspartate 279 coordinates substrate.

It belongs to the metallo-dependent hydrolases superfamily. Adenosine and AMP deaminases family. Adenosine deaminase subfamily. It depends on Zn(2+) as a cofactor.

The catalysed reaction is adenosine + H2O + H(+) = inosine + NH4(+). It carries out the reaction 2'-deoxyadenosine + H2O + H(+) = 2'-deoxyinosine + NH4(+). Catalyzes the hydrolytic deamination of adenosine and 2-deoxyadenosine. This chain is Adenosine deaminase, found in Salmonella agona (strain SL483).